The chain runs to 424 residues: Tyrosine--tRNA ligase (424 aa).

Tyr-37 is a binding site for L-tyrosine. Positions 42–51 match the 'HIGH' region motif; that stretch reads PTADSLHLGH. Residues Tyr-175 and Gln-179 each coordinate L-tyrosine. The short motif at 235–239 is the 'KMSKS' region element; that stretch reads KFGKT. Position 238 (Lys-238) interacts with ATP. The region spanning 357–414 is the S4 RNA-binding domain; that stretch reads ADLQQALVAAELVPSRGQARTLISSNAVSVNGEKQASIDYVFDDADRLYSRYTLLRRG.

It belongs to the class-I aminoacyl-tRNA synthetase family. TyrS type 1 subfamily. Homodimer.

The protein resides in the cytoplasm. The enzyme catalyses tRNA(Tyr) + L-tyrosine + ATP = L-tyrosyl-tRNA(Tyr) + AMP + diphosphate + H(+). Its function is as follows. Catalyzes the attachment of tyrosine to tRNA(Tyr) in a two-step reaction: tyrosine is first activated by ATP to form Tyr-AMP and then transferred to the acceptor end of tRNA(Tyr). The protein is Tyrosine--tRNA ligase of Sodalis glossinidius (strain morsitans).